The following is a 422-amino-acid chain: Imidazolonepropionase (422 aa).

2 residues coordinate Fe(3+): His82 and His84. The Zn(2+) site is built by His82 and His84. The 4-imidazolone-5-propanoate site is built by Arg91, Tyr154, and His187. Tyr154 contacts N-formimidoyl-L-glutamate. Residue His252 participates in Fe(3+) binding. Position 252 (His252) interacts with Zn(2+). Glu255 lines the 4-imidazolone-5-propanoate pocket. Asp327 provides a ligand contact to Fe(3+). Asp327 contributes to the Zn(2+) binding site. The N-formimidoyl-L-glutamate site is built by Asn329 and Gly331. Ser332 lines the 4-imidazolone-5-propanoate pocket.

Belongs to the metallo-dependent hydrolases superfamily. HutI family. It depends on Zn(2+) as a cofactor. The cofactor is Fe(3+).

The protein resides in the cytoplasm. The catalysed reaction is 4-imidazolone-5-propanoate + H2O = N-formimidoyl-L-glutamate. It functions in the pathway amino-acid degradation; L-histidine degradation into L-glutamate; N-formimidoyl-L-glutamate from L-histidine: step 3/3. Catalyzes the hydrolytic cleavage of the carbon-nitrogen bond in imidazolone-5-propanoate to yield N-formimidoyl-L-glutamate. It is the third step in the universal histidine degradation pathway. The sequence is that of Imidazolonepropionase from Alkaliphilus oremlandii (strain OhILAs) (Clostridium oremlandii (strain OhILAs)).